We begin with the raw amino-acid sequence, 701 residues long: Polyribonucleotide nucleotidyltransferase (701 aa).

Asp-480 and Asp-486 together coordinate Mg(2+). In terms of domain architecture, KH spans 547 to 606 (PKIDTIKIDVDKIKVVIGKGGETIDKIIAETGVKIDIDDEGNVSIYSSDQAAINRTKEII). The S1 motif domain maps to 616–684 (GEVYHAKVVR…EKGRVDASMK (69 aa)). The interval 682–701 (SMKALIPRPPKPEKKEEKHD) is disordered. Over residues 691-701 (PKPEKKEEKHD) the composition is skewed to basic and acidic residues.

Belongs to the polyribonucleotide nucleotidyltransferase family. It depends on Mg(2+) as a cofactor.

The protein localises to the cytoplasm. It carries out the reaction RNA(n+1) + phosphate = RNA(n) + a ribonucleoside 5'-diphosphate. In terms of biological role, involved in mRNA degradation. Catalyzes the phosphorolysis of single-stranded polyribonucleotides processively in the 3'- to 5'-direction. The sequence is that of Polyribonucleotide nucleotidyltransferase from Streptococcus pyogenes serotype M12 (strain MGAS2096).